A 591-amino-acid polypeptide reads, in one-letter code: Eukaryotic translation initiation factor 3 subunit D (591 aa).

Positions 100-159 (SGGNPDEDAAFRLVDGKPPPRPKFGPKWRFNPHHNRNQLPQRRDEEVEAKKRDAEKERAR) are disordered. The span at 123-135 (FGPKWRFNPHHNR) shows a compositional bias: basic residues. A compositionally biased stretch (basic and acidic residues) spans 140-159 (QRRDEEVEAKKRDAEKERAR). The tract at residues 309-323 (QLDLLSVHETSQEPL) is RNA gate. The span at 549–560 (DYVEEPLPEDEQ) shows a compositional bias: acidic residues. The interval 549–591 (DYVEEPLPEDEQVQPTEENTEGAEASVAATKETEEKKADDAQA) is disordered. Positions 579–591 (KETEEKKADDAQA) are enriched in basic and acidic residues.

It belongs to the eIF-3 subunit D family. In terms of assembly, component of the eukaryotic translation initiation factor 3 (eIF-3) complex, which is composed of at least 13 different subunits.

It localises to the cytoplasm. Functionally, mRNA cap-binding component of the eukaryotic translation initiation factor 3 (eIF-3) complex, which is involved in protein synthesis of a specialized repertoire of mRNAs and, together with other initiation factors, stimulates binding of mRNA and methionyl-tRNAi to the 40S ribosome. The eIF-3 complex specifically targets and initiates translation of a subset of mRNAs involved in cell proliferation. In the eIF-3 complex, eif3d specifically recognizes and binds the 7-methylguanosine cap of a subset of mRNAs. This is Eukaryotic translation initiation factor 3 subunit D (TIF3D1) from Arabidopsis thaliana (Mouse-ear cress).